Reading from the N-terminus, the 542-residue chain is CTP synthase (542 aa).

Residues 1–265 are amidoligase domain; it reads MTRFIFITGG…DVQVCRHFHL (265 aa). A CTP-binding site is contributed by Ser-13. Ser-13 is a binding site for UTP. Residues 14–19 and Asp-71 contribute to the ATP site; that span reads SLGKGL. Mg(2+)-binding residues include Asp-71 and Glu-139. CTP is bound by residues 146–148, 186–191, and Lys-222; these read DIE and KTKPTQ. UTP is bound by residues 186 to 191 and Lys-222; that span reads KTKPTQ. The Glutamine amidotransferase type-1 domain occupies 291-541; the sequence is TIAVVGKYTS…VQAAITQSRL (251 aa). Position 353 (Gly-353) interacts with L-glutamine. Cys-380 serves as the catalytic Nucleophile; for glutamine hydrolysis. L-glutamine-binding positions include 381-384, Glu-404, and Arg-469; that span reads FGMQ. Active-site residues include His-514 and Glu-516.

This sequence belongs to the CTP synthase family. Homotetramer.

It catalyses the reaction UTP + L-glutamine + ATP + H2O = CTP + L-glutamate + ADP + phosphate + 2 H(+). The enzyme catalyses L-glutamine + H2O = L-glutamate + NH4(+). It carries out the reaction UTP + NH4(+) + ATP = CTP + ADP + phosphate + 2 H(+). Its pathway is pyrimidine metabolism; CTP biosynthesis via de novo pathway; CTP from UDP: step 2/2. Allosterically activated by GTP, when glutamine is the substrate; GTP has no effect on the reaction when ammonia is the substrate. The allosteric effector GTP functions by stabilizing the protein conformation that binds the tetrahedral intermediate(s) formed during glutamine hydrolysis. Inhibited by the product CTP, via allosteric rather than competitive inhibition. Catalyzes the ATP-dependent amination of UTP to CTP with either L-glutamine or ammonia as the source of nitrogen. Regulates intracellular CTP levels through interactions with the four ribonucleotide triphosphates. The protein is CTP synthase of Rhodospirillum rubrum (strain ATCC 11170 / ATH 1.1.1 / DSM 467 / LMG 4362 / NCIMB 8255 / S1).